The chain runs to 122 residues: Large ribosomal subunit protein uL14 (122 aa).

Belongs to the universal ribosomal protein uL14 family. In terms of assembly, part of the 50S ribosomal subunit. Forms a cluster with proteins L3 and L19. In the 70S ribosome, L14 and L19 interact and together make contacts with the 16S rRNA in bridges B5 and B8.

Its function is as follows. Binds to 23S rRNA. Forms part of two intersubunit bridges in the 70S ribosome. The protein is Large ribosomal subunit protein uL14 of Chlamydia trachomatis serovar A (strain ATCC VR-571B / DSM 19440 / HAR-13).